A 414-amino-acid chain; its full sequence is NADH-quinone oxidoreductase subunit D (414 aa).

This sequence belongs to the complex I 49 kDa subunit family. As to quaternary structure, NDH-1 is composed of 14 different subunits. Subunits NuoB, C, D, E, F, and G constitute the peripheral sector of the complex.

Its subcellular location is the cell inner membrane. The catalysed reaction is a quinone + NADH + 5 H(+)(in) = a quinol + NAD(+) + 4 H(+)(out). Functionally, NDH-1 shuttles electrons from NADH, via FMN and iron-sulfur (Fe-S) centers, to quinones in the respiratory chain. The immediate electron acceptor for the enzyme in this species is believed to be ubiquinone. Couples the redox reaction to proton translocation (for every two electrons transferred, four hydrogen ions are translocated across the cytoplasmic membrane), and thus conserves the redox energy in a proton gradient. The protein is NADH-quinone oxidoreductase subunit D of Akkermansia muciniphila (strain ATCC BAA-835 / DSM 22959 / JCM 33894 / BCRC 81048 / CCUG 64013 / CIP 107961 / Muc).